Consider the following 788-residue polypeptide: Histidine--tRNA ligase, cytoplasmic (788 aa).

The segment at 252 to 286 is disordered; the sequence is PQACEENEAGSSTENPHASGEKPKGDKKSKKKKTL.

This sequence belongs to the class-II aminoacyl-tRNA synthetase family. Homodimer.

It carries out the reaction tRNA(His) + L-histidine + ATP = L-histidyl-tRNA(His) + AMP + diphosphate + H(+). This is Histidine--tRNA ligase, cytoplasmic from Oryza sativa subsp. japonica (Rice).